A 705-amino-acid chain; its full sequence is Elongation factor G (705 aa).

Residues 8-291 form the tr-type G domain; sequence EKVRNIGIMA…AVVEYLPSPI (284 aa). GTP contacts are provided by residues 17–24, 90–94, and 144–147; these read AHIDAGKT, DTPGH, and NKMD.

The protein belongs to the TRAFAC class translation factor GTPase superfamily. Classic translation factor GTPase family. EF-G/EF-2 subfamily.

Its subcellular location is the cytoplasm. Functionally, catalyzes the GTP-dependent ribosomal translocation step during translation elongation. During this step, the ribosome changes from the pre-translocational (PRE) to the post-translocational (POST) state as the newly formed A-site-bound peptidyl-tRNA and P-site-bound deacylated tRNA move to the P and E sites, respectively. Catalyzes the coordinated movement of the two tRNA molecules, the mRNA and conformational changes in the ribosome. The protein is Elongation factor G of Chloroherpeton thalassium (strain ATCC 35110 / GB-78).